We begin with the raw amino-acid sequence, 461 residues long: MSQDGTWSDESDWELDDSDLAEFGPVVAVVGRPNVGKSTLVNRILGRREAVVQDVPGVTRDRVSYDAMWTGRRFVVQDTGGWEPDAKGLKRLVAEQASVAMRTADAVILVVDVGVGATDADEAAARILLRSGKLVFLAANKVDGEKGESDASALWSLGLGEPHAISAMHGRGVADLLDKVLAALPNVAESTSLDGGLRRVALVGKPNVGKSSLLNKLAGDQRSVVHEAAGTTVDPVDSLIEMGGRVWRFVDTAGLRRKVGQASGHEFYASVRTHGAIDSAEVVIMLIDASEPLTGQDQRVLSMVIDAGRALVLAFNKWDLVDEDRCDLLEREIDRELVQVRWAQRVNISAKTGRAVQKLVPAMENSLASWDTRIATGPLNIWIKAVVAATPPPVRGGKQPRILFATQATARPPTFVLFTTGFLEACYRRFLERRLRETFGFEGSPIRINVRVREKRGLKRR.

2 consecutive EngA-type G domains span residues 25–188 (PVVA…PNVA) and 198–371 (RRVA…ASWD). GTP is bound by residues 31–38 (GRPNVGKS), 78–82 (DTGGW), 140–143 (NKVD), 204–211 (GKPNVGKS), 251–255 (DTAGL), and 316–319 (NKWD). The region spanning 372–454 (TRIATGPLNI…PIRINVRVRE (83 aa)) is the KH-like domain.

The protein belongs to the TRAFAC class TrmE-Era-EngA-EngB-Septin-like GTPase superfamily. EngA (Der) GTPase family. In terms of assembly, associates with the 50S ribosomal subunit.

In terms of biological role, GTPase that plays an essential role in the late steps of ribosome biogenesis. This chain is GTPase Der, found in Mycobacterium leprae (strain TN).